Reading from the N-terminus, the 173-residue chain is MAKRRKSSKNKEKETNWQERVIQIRRVSKVVKGGKKLSFRAIVVIGNETGKVGVGVGKAGDVIGAVRKGVSDAKKHVVDVPLTKTNTITHRINGVAGGAKVMMRPAAPGTGVIAGGAVRTVLELAGVKNILAKQLGSSSPLNNARATVDALGNLRSFSSVAQERGVSIERIYA.

Residues 17–80 (WQERVIQIRR…SDAKKHVVDV (64 aa)) enclose the S5 DRBM domain.

This sequence belongs to the universal ribosomal protein uS5 family. In terms of assembly, part of the 30S ribosomal subunit. Contacts proteins S4 and S8.

Its function is as follows. With S4 and S12 plays an important role in translational accuracy. Located at the back of the 30S subunit body where it stabilizes the conformation of the head with respect to the body. The protein is Small ribosomal subunit protein uS5 of Picosynechococcus sp. (strain ATCC 27264 / PCC 7002 / PR-6) (Agmenellum quadruplicatum).